The primary structure comprises 188 residues: Elongation factor P (188 aa).

Belongs to the elongation factor P family.

The protein resides in the cytoplasm. The protein operates within protein biosynthesis; polypeptide chain elongation. Functionally, involved in peptide bond synthesis. Stimulates efficient translation and peptide-bond synthesis on native or reconstituted 70S ribosomes in vitro. Probably functions indirectly by altering the affinity of the ribosome for aminoacyl-tRNA, thus increasing their reactivity as acceptors for peptidyl transferase. This Caulobacter vibrioides (strain ATCC 19089 / CIP 103742 / CB 15) (Caulobacter crescentus) protein is Elongation factor P.